Here is a 380-residue protein sequence, read N- to C-terminus: Cytochrome b (380 aa).

The next 4 membrane-spanning stretches (helical) occupy residues 34–54 (FGSLLGLCLITQILTGLFLAM), 78–99 (WLLRNVHANGASLFFICMYCHI), 114–134 (WNVGVILFLVTVLTAFVGYVL), and 179–199 (FFAFHFLFPFIIAALAIIDLV). Residues H84 and H98 each coordinate heme b. Position 183 (H183) interacts with heme b. H202 contributes to the a ubiquinone binding site. The next 4 membrane-spanning stretches (helical) occupy residues 227 to 247 (TKDTVGFIALIAALFVLALLF), 289 to 309 (LGGVIALVAAILVLFLMPLLN), 321 to 341 (LSQATFWILVATFFVLTWIGS), and 348 to 369 (FVLIGQIASLLYFSLFIFGFPL).

This sequence belongs to the cytochrome b family. In terms of assembly, the main subunits of complex b-c1 are: cytochrome b, cytochrome c1 and the Rieske protein. The cofactor is heme b.

The protein localises to the mitochondrion inner membrane. Its function is as follows. Component of the ubiquinol-cytochrome c reductase complex (complex III or cytochrome b-c1 complex) that is part of the mitochondrial respiratory chain. The b-c1 complex mediates electron transfer from ubiquinol to cytochrome c. Contributes to the generation of a proton gradient across the mitochondrial membrane that is then used for ATP synthesis. This Paracentrotus lividus (Common sea urchin) protein is Cytochrome b (MT-CYB).